A 600-amino-acid chain; its full sequence is MDKKYIRNFSIVAHIDHGKSTLSDRIIEFTNTLTTREMKNQILDSMDIERERGITIKLNAVQLIYHNPKDNQDYYFHLIDTPGHVDFTYEVSRSLAACEGALLVVDASQGVEAQTLSNVYLALENNLEIVPVINKIDLPSADIDRVKKQVEDTIGLDCSNAPLVSAKTGLNINQIMEAIIEQIPPPLDSDDNKPLQALVFDSYYDAYKGAVCLVRIKNGQVKVGTKIRFMSNNETFIVSALGVNTPKIVNKEVLVAGEVGWIAASIKNIKSISVGDTITDDANPATTSLPGYKKILPMVYCGLYPIDSTQYELFKEALEKIYLSDSSLTYEYETSQALGFGIRCGFLGLLHMDVIRERLDREFNIALIATAPSVIYKVLLNDGTILEIDSAAKLPDKTLYKEIQEPFAKAEIIVPDDFLGNVMELCQNYRGEYLDLVNVDSTRKKVTYLIPLAEIMYSFFDKLKSCSKGYATLDYEILDYRKQDLVKVDILLNGNKVDALSTIMHREFASDRSRKICLKLKEHIPKHQFEIPIQAVIGGKIIARETVSAMRKNVLAKCYGGDITRKKKLLEQQKEGKKRLKAIGNVSVPHDTFVKILSEE.

Residues 4 to 187 (KYIRNFSIVA…AIIEQIPPPL (184 aa)) form the tr-type G domain. Residues 16 to 21 (DHGKST) and 134 to 137 (NKID) contribute to the GTP site.

Belongs to the TRAFAC class translation factor GTPase superfamily. Classic translation factor GTPase family. LepA subfamily.

It is found in the cell membrane. The catalysed reaction is GTP + H2O = GDP + phosphate + H(+). Its function is as follows. Required for accurate and efficient protein synthesis under certain stress conditions. May act as a fidelity factor of the translation reaction, by catalyzing a one-codon backward translocation of tRNAs on improperly translocated ribosomes. Back-translocation proceeds from a post-translocation (POST) complex to a pre-translocation (PRE) complex, thus giving elongation factor G a second chance to translocate the tRNAs correctly. Binds to ribosomes in a GTP-dependent manner. The chain is Elongation factor 4 from Malacoplasma penetrans (strain HF-2) (Mycoplasma penetrans).